The following is a 640-amino-acid chain: Dextranase (640 aa).

Residues 1-32 form the signal peptide; sequence MPGTGLGRLAKRMTAAAAVFFISTSAVLPAQA. Positions 33 to 49 are excised as a propeptide; the sequence is ATAPAAAPPGVPAALKA. The segment at 248-269 is disordered; it reads EQKERLVPTEESGSIHYPEPGE.

This sequence belongs to the glycosyl hydrolase 49 family.

The protein localises to the secreted. The catalysed reaction is Endohydrolysis of (1-&gt;6)-alpha-D-glucosidic linkages in dextran.. Its function is as follows. Efficiently decomposes water-insoluble glucan as well as dextran. The sequence is that of Dextranase from Arthrobacter sp. (strain CB-8).